Consider the following 1176-residue polypeptide: Translation initiation factor IF-2 (1176 aa).

4 stretches are compositionally biased toward low complexity: residues 32–44, 57–79, 94–166, and 193–235; these read IAAKSHSSSISDS, ASPSQPTAPAAKPAPAKPAAGKS, APVA…AAPS, and KPTP…VKPT. 2 disordered regions span residues 32–502 and 535–567; these read IAAK…QRQK and RPAKPKAQQRTAPKPVAAVRKRRKETARQRQRR. Pro residues predominate over residues 251 to 270; it reads APPPASTPRPAPSRPTPRPA. Low complexity-rich tracts occupy residues 388-409 and 439-469; these read GRPGAPTRPGAPTRPGMPGGMR and NRPTEAAGTATPPVARPTAPSAPRRPGFRPG. The segment covering 478–492 has biased composition (basic and acidic residues); sequence GRPDWDDSAKLEALR. Residues 553–567 show a composition bias toward basic residues; that stretch reads VRKRRKETARQRQRR. The 173-residue stretch at 668 to 840 folds into the tr-type G domain; that stretch reads RRPPVVTVMG…LLLVTEVEDL (173 aa). The segment at 677-684 is G1; it reads GHVDHGKT. 677–684 lines the GTP pocket; the sequence is GHVDHGKT. The G2 stretch occupies residues 702-706; the sequence is GITQH. The G3 stretch occupies residues 727-730; sequence DTPG. Residues 727-731 and 781-784 each bind GTP; these read DTPGH and NKID. Residues 781–784 form a G4 region; sequence NKID. Residues 817-819 form a G5 region; sequence SAI.

It belongs to the TRAFAC class translation factor GTPase superfamily. Classic translation factor GTPase family. IF-2 subfamily.

The protein localises to the cytoplasm. Functionally, one of the essential components for the initiation of protein synthesis. Protects formylmethionyl-tRNA from spontaneous hydrolysis and promotes its binding to the 30S ribosomal subunits. Also involved in the hydrolysis of GTP during the formation of the 70S ribosomal complex. This chain is Translation initiation factor IF-2, found in Synechococcus sp. (strain CC9902).